A 275-amino-acid polypeptide reads, in one-letter code: COP9 signalosome complex subunit 7a (275 aa).

Ser2 is modified (N-acetylserine). The PCI domain occupies 2–159 (SAEVKVTGQN…QRLEVDYSIG (158 aa)). Residues 185–233 (LSGIEEQVSRANQHKEQQLGLKQQIESEVANLKKTIKVTTAAAAAATSQ) are a coiled coil. The disordered stretch occupies residues 228–275 (AAATSQDPEQHLTELREPASGTNQRQPSKKASKGKGLRGSAKIWSKSN). The span at 235–244 (PEQHLTELRE) shows a compositional bias: basic and acidic residues. Basic residues predominate over residues 254 to 263 (PSKKASKGKG).

This sequence belongs to the CSN7/EIF3M family. CSN7 subfamily. Component of the CSN complex, composed of COPS1/GPS1, COPS2, COPS3, COPS4, COPS5, COPS6, COPS7 (COPS7A or COPS7B), COPS8 and COPS9. In the complex, it probably interacts directly with COPS1, COPS2, COPS4, COPS5, COPS6 and COPS8. Interacts with PMF1. Interacts with the translation initiation factor EIF3S6. Interacts with CK2 and PKD. Interacts directly with ID3. Phosphorylated by CK2 and PKD kinases.

It is found in the cytoplasm. The protein localises to the nucleus. Component of the COP9 signalosome complex (CSN), a complex involved in various cellular and developmental processes. The CSN complex is an essential regulator of the ubiquitin (Ubl) conjugation pathway by mediating the deneddylation of the cullin subunits of SCF-type E3 ligase complexes, leading to decrease the Ubl ligase activity of SCF-type complexes such as SCF, CSA or DDB2. The complex is also involved in phosphorylation of p53/TP53, JUN, I-kappa-B-alpha/NFKBIA, ITPK1 and IRF8/ICSBP, possibly via its association with CK2 and PKD kinases. CSN-dependent phosphorylation of TP53 and JUN promotes and protects degradation by the Ubl system, respectively. The sequence is that of COP9 signalosome complex subunit 7a (Cops7a) from Mus musculus (Mouse).